The primary structure comprises 516 residues: Probable cytosol aminopeptidase (516 aa).

Residues lysine 288 and aspartate 293 each contribute to the Mn(2+) site. Lysine 300 is a catalytic residue. Residues aspartate 311, aspartate 370, and glutamate 372 each coordinate Mn(2+). Residue arginine 374 is part of the active site.

The protein belongs to the peptidase M17 family. The cofactor is Mn(2+).

The protein localises to the cytoplasm. It carries out the reaction Release of an N-terminal amino acid, Xaa-|-Yaa-, in which Xaa is preferably Leu, but may be other amino acids including Pro although not Arg or Lys, and Yaa may be Pro. Amino acid amides and methyl esters are also readily hydrolyzed, but rates on arylamides are exceedingly low.. It catalyses the reaction Release of an N-terminal amino acid, preferentially leucine, but not glutamic or aspartic acids.. Its function is as follows. Presumably involved in the processing and regular turnover of intracellular proteins. Catalyzes the removal of unsubstituted N-terminal amino acids from various peptides. The polypeptide is Probable cytosol aminopeptidase (Cupriavidus taiwanensis (strain DSM 17343 / BCRC 17206 / CCUG 44338 / CIP 107171 / LMG 19424 / R1) (Ralstonia taiwanensis (strain LMG 19424))).